Reading from the N-terminus, the 1607-residue chain is Thrombospondin type-1 domain-containing protein 7B (1607 aa).

The first 31 residues, 1–31 (MFLRSDLAVTHWVSRSMRKLFLVLSLLLSQA), serve as a signal peptide directing secretion. Residues 32-1556 (AHLEGRKDNQ…QPLDPDGRVK (1525 aa)) lie on the Extracellular side of the membrane. TSP type-1 domains follow at residues 40-98 (NQFL…RVCD), 102-177 (DLFQ…IPCP), 179-233 (DCVV…VSCP), 336-392 (DCET…IAEG), 399-482 (PRYS…VPCS), 484-543 (DCIV…PMCH), 601-661 (DCVV…HSCT), 662-735 (QLYW…LPCK), 737-796 (DCLV…SLCP), 797-869 (SYRW…IPCR), 871-924 (DCTF…CPCD), 925-999 (TFMS…IPCP), 1001-1126 (DCKL…LLCP), 1128-1182 (ECVM…ENCF), 1183-1246 (QFQY…VECV), 1248-1303 (NCQL…TPCY), 1304-1369 (SWVL…VPCP), and 1371-1432 (DCHI…GKCY). N-linked (GlcNAc...) asparagine glycans are attached at residues asparagine 150 and asparagine 219. 3 disulfides stabilise this stretch: cysteine 411–cysteine 477, cysteine 431–cysteine 481, and cysteine 442–cysteine 466. Intrachain disulfides connect cysteine 602–cysteine 643, cysteine 613–cysteine 617, and cysteine 655–cysteine 660. The N-linked (GlcNAc...) asparagine glycan is linked to asparagine 683. Cystine bridges form between cysteine 738–cysteine 779, cysteine 749–cysteine 753, and cysteine 789–cysteine 795. Asparagine 757 carries an N-linked (GlcNAc...) asparagine glycan. N-linked (GlcNAc...) asparagine glycosylation is present at asparagine 842. N-linked (GlcNAc...) asparagine glycosylation occurs at asparagine 933. 5 cysteine pairs are disulfide-bonded: cysteine 937/cysteine 994, cysteine 960/cysteine 998, cysteine 971/cysteine 984, cysteine 1002/cysteine 1039, and cysteine 1013/cysteine 1017. The N-linked (GlcNAc...) asparagine glycan is linked to asparagine 985. A glycan (N-linked (GlcNAc...) asparagine) is linked at asparagine 1105. Cysteine 1121 and cysteine 1125 are oxidised to a cystine. 2 N-linked (GlcNAc...) asparagine glycosylation sites follow: asparagine 1187 and asparagine 1199. Disulfide bonds link cysteine 1249/cysteine 1287, cysteine 1260/cysteine 1264, and cysteine 1297/cysteine 1302. N-linked (GlcNAc...) asparagine glycosylation is found at asparagine 1309 and asparagine 1335. 3 cysteine pairs are disulfide-bonded: cysteine 1372–cysteine 1416, cysteine 1383–cysteine 1387, and cysteine 1426–cysteine 1431. Asparagine 1457 and asparagine 1525 each carry an N-linked (GlcNAc...) asparagine glycan. A helical membrane pass occupies residues 1557–1577 (MWVYGVSGGSFLIMIFLVFTS). The Cytoplasmic portion of the chain corresponds to 1578 to 1607 (YLVCKKPKPHQSTPRHQKPLTLAYDGDLDM).

The protein resides in the membrane. This chain is Thrombospondin type-1 domain-containing protein 7B, found in Mus musculus (Mouse).